Reading from the N-terminus, the 207-residue chain is Ribosomal RNA large subunit methyltransferase E (207 aa).

S-adenosyl-L-methionine contacts are provided by glycine 60, tryptophan 62, aspartate 80, aspartate 96, and aspartate 121. Residue lysine 161 is the Proton acceptor of the active site.

This sequence belongs to the class I-like SAM-binding methyltransferase superfamily. RNA methyltransferase RlmE family.

It is found in the cytoplasm. The catalysed reaction is uridine(2552) in 23S rRNA + S-adenosyl-L-methionine = 2'-O-methyluridine(2552) in 23S rRNA + S-adenosyl-L-homocysteine + H(+). Specifically methylates the uridine in position 2552 of 23S rRNA at the 2'-O position of the ribose in the fully assembled 50S ribosomal subunit. The chain is Ribosomal RNA large subunit methyltransferase E from Methylobacillus flagellatus (strain ATCC 51484 / DSM 6875 / VKM B-1610 / KT).